The following is a 581-amino-acid chain: 4-hydroxy-3-methylbut-2-en-1-yl diphosphate synthase (flavodoxin) (581 aa).

4 residues coordinate [4Fe-4S] cluster: Cys-489, Cys-492, Cys-523, and Glu-530.

It belongs to the IspG family. [4Fe-4S] cluster serves as cofactor.

It catalyses the reaction (2E)-4-hydroxy-3-methylbut-2-enyl diphosphate + oxidized [flavodoxin] + H2O + 2 H(+) = 2-C-methyl-D-erythritol 2,4-cyclic diphosphate + reduced [flavodoxin]. It functions in the pathway isoprenoid biosynthesis; isopentenyl diphosphate biosynthesis via DXP pathway; isopentenyl diphosphate from 1-deoxy-D-xylulose 5-phosphate: step 5/6. Functionally, converts 2C-methyl-D-erythritol 2,4-cyclodiphosphate (ME-2,4cPP) into 1-hydroxy-2-methyl-2-(E)-butenyl 4-diphosphate. The chain is 4-hydroxy-3-methylbut-2-en-1-yl diphosphate synthase (flavodoxin) from Porphyromonas gingivalis (strain ATCC BAA-308 / W83).